Reading from the N-terminus, the 192-residue chain is Signal peptidase complex catalytic subunit SEC11C (192 aa).

At 1–28 (MVRAGAVGTHLPTSSLDIFGDLRKMNKR) the chain is on the cytoplasmic side. The helical; Signal-anchor for type II membrane protein transmembrane segment at 29–48 (QLYYQVLNFAMIVSSALMIW) threads the bilayer. At 49 to 192 (KGLIVLTGSE…GAYVLLKRES (144 aa)) the chain is on the lumenal side. Residues S68, H108, and D134 each act as charge relay system in the active site. Positions 177–188 (ALLAVMGAYVLL) are C-terminal short (CTS) helix.

The protein belongs to the peptidase S26B family. Component of the signal peptidase complex paralog C (SPC-C) composed of a catalytic subunit SEC11C and three accessory subunits SPCS1, SPCS2 and SPCS3. Within the complex, interacts with SPCS2 and SPCS3. The complex induces a local thinning of the ER membrane which is used to measure the length of the signal peptide (SP) h-region of protein substrates. This ensures the selectivity of the complex towards h-regions shorter than 18-20 amino acids. In terms of processing, may undergo processing at the N-terminus.

Its subcellular location is the endoplasmic reticulum membrane. The enzyme catalyses Cleavage of hydrophobic, N-terminal signal or leader sequences from secreted and periplasmic proteins.. Its function is as follows. Catalytic component of the signal peptidase complex (SPC) which catalyzes the cleavage of N-terminal signal sequences from nascent proteins as they are translocated into the lumen of the endoplasmic reticulum. Specifically cleaves N-terminal signal peptides that contain a hydrophobic alpha-helix (h-region) shorter than 18-20 amino acids. The polypeptide is Signal peptidase complex catalytic subunit SEC11C (Sec11c) (Mus musculus (Mouse)).